Consider the following 202-residue polypeptide: Alcohol dehydrogenase-related 31 kDa protein (202 aa).

NAD(+) is bound at residue 11 to 34 (YVADCGGIALETSKVLMTKNIAKL). Serine 139 is a substrate binding site. The active-site Proton acceptor is the tyrosine 152.

It belongs to the short-chain dehydrogenases/reductases (SDR) family.

In Drosophila erecta (Fruit fly), this protein is Alcohol dehydrogenase-related 31 kDa protein (Adhr).